The sequence spans 191 residues: Cyclin-dependent kinase inhibitor 1 (191 aa).

The tract at residues 62–81 (LIHLEEEDKDGDTETSTYRR) is disordered. A required for inhibitory function and interaction with CDK kinase complexes region spans residues 162–191 (QLKEKFKKKYNFDFEKEKPLEGRYEWVKLE).

This sequence belongs to the CDI family. ICK/KRP subfamily. Specifically interacts with CDKA-1, but not with CDKB1-1. Interacts with CYCD2-1 and CYCD3-1. In terms of processing, ubiquitinated independently by RKP and SCF (SKP1-CUL1-FBL5/SKP2B) protein ligase complex, leading to proteasomal degradation. As to expression, expressed at low levels in roots, stems, leaves and flowers.

The protein resides in the nucleus. The protein localises to the nucleoplasm. Binds and inhibits CYCD2-1/CDKA-1 kinase complex activity. Regulates cell division which is crucial for plant growth, development and morphogenesis. Functions in turning cells from a mitotic to an endoreplicating cell cycle mode. Acts cell- and non-cell-autonomously to regulate endoreduplication by allowing S phase progression, but blocking entry into mitosis. Keeps on the one hand the plant cell cycle locally controlled, and on the other hand provides a possibility of linking cell cycle control in single cells with the supracellular organization of a tissue or an organ. May target specifically CDKA-1. This is Cyclin-dependent kinase inhibitor 1 (KRP1) from Arabidopsis thaliana (Mouse-ear cress).